A 639-amino-acid chain; its full sequence is Transcription factor phomR' (639 aa).

Positions 14–41 form a DNA-binding region, zn(2)-C6 fungal-type; it reads CWTCRLRRKKCNEGGPPCDNCEARGIHC. Disordered stretches follow at residues 58-136 and 476-499; these read REEA…AGTG and LPRS…TGPE. The span at 68–108 shows a compositional bias: low complexity; it reads SGRGRSYSRSSSTAAAAAPKPAEGAMVTGGSSSSSRGSGSS.

Its subcellular location is the nucleus. Its function is as follows. Transcription factor; part of the gene cluster that mediates the biosynthesis of the phomopsins, a group of hexapeptide mycotoxins which infects lupins and causes lupinosis disease in livestock. May play a role in the regulation of the production of phomopsins. The protein is Transcription factor phomR' of Diaporthe leptostromiformis (Lupinosis disease fungus).